A 203-amino-acid polypeptide reads, in one-letter code: Endoplasmic reticulum transmembrane protein 3 (203 aa).

The Lumenal segment spans residues 1–6 (MSLYYT). Residues 7-27 (LVFAILVVEIFMFSILALPIP) traverse the membrane as a helical segment. At 28-45 (SRYRRPLTLLLLKPFKSS) the chain is on the cytoplasmic side. A helical membrane pass occupies residues 46-66 (TVQVAIKCVLGFILLLFIDCI). Topologically, residues 67–110 (NRVYSIDKELQLSSASQNNGAIIAQDRIEVLSRKFFAQRNMYLT) are lumenal. A helical transmembrane segment spans residues 111–131 (GITLFLTFVVVRTFGLVIELL). The Cytoplasmic segment spans residues 132-203 (TMKDIYRASP…KSESLQEEIN (72 aa)). A disordered region spans residues 142–171 (PVASSDVKKNDSVTAEAAAQSGASKDDHGD).

It belongs to the BCAP29/BCAP31 family.

It is found in the endoplasmic reticulum membrane. Its function is as follows. May play a role in anterograde transport of membrane proteins from the endoplasmic reticulum to the Golgi. May be involved in invertase secretion. The protein is Endoplasmic reticulum transmembrane protein 3 (YET3) of Saccharomyces cerevisiae (strain ATCC 204508 / S288c) (Baker's yeast).